We begin with the raw amino-acid sequence, 89 residues long: Small ribosomal subunit protein uS15 (89 aa).

It belongs to the universal ribosomal protein uS15 family. Part of the 30S ribosomal subunit. Forms a bridge to the 50S subunit in the 70S ribosome, contacting the 23S rRNA.

Its function is as follows. One of the primary rRNA binding proteins, it binds directly to 16S rRNA where it helps nucleate assembly of the platform of the 30S subunit by binding and bridging several RNA helices of the 16S rRNA. Functionally, forms an intersubunit bridge (bridge B4) with the 23S rRNA of the 50S subunit in the ribosome. The polypeptide is Small ribosomal subunit protein uS15 (Cereibacter sphaeroides (strain ATCC 17023 / DSM 158 / JCM 6121 / CCUG 31486 / LMG 2827 / NBRC 12203 / NCIMB 8253 / ATH 2.4.1.) (Rhodobacter sphaeroides)).